Reading from the N-terminus, the 186-residue chain is Heat shock protein 23 (186 aa).

One can recognise a sHSP domain in the interval 53–161 (VGASSGSSGA…KGNERIVQIQ (109 aa)). The interval 163–186 (VGPAHLNVKENPKEAVEQDNGNDK) is disordered. Positions 169–186 (NVKENPKEAVEQDNGNDK) are enriched in basic and acidic residues.

It belongs to the small heat shock protein (HSP20) family.

This chain is Heat shock protein 23 (Hsp23), found in Drosophila melanogaster (Fruit fly).